The chain runs to 392 residues: Formate-dependent phosphoribosylglycinamide formyltransferase (392 aa).

N(1)-(5-phospho-beta-D-ribosyl)glycinamide-binding positions include 22–23 (EL) and E82. ATP contacts are provided by residues R114, K155, 160-165 (SSGKGQ), 195-198 (EGVV), and E203. In terms of domain architecture, ATP-grasp spans 119–308 (RLAAEELGLP…EFALHVRAFL (190 aa)). The Mg(2+) site is built by E267 and E279. N(1)-(5-phospho-beta-D-ribosyl)glycinamide is bound by residues D286, K355, and 362–363 (RR).

This sequence belongs to the PurK/PurT family. In terms of assembly, homodimer.

The catalysed reaction is N(1)-(5-phospho-beta-D-ribosyl)glycinamide + formate + ATP = N(2)-formyl-N(1)-(5-phospho-beta-D-ribosyl)glycinamide + ADP + phosphate + H(+). It functions in the pathway purine metabolism; IMP biosynthesis via de novo pathway; N(2)-formyl-N(1)-(5-phospho-D-ribosyl)glycinamide from N(1)-(5-phospho-D-ribosyl)glycinamide (formate route): step 1/1. In terms of biological role, involved in the de novo purine biosynthesis. Catalyzes the transfer of formate to 5-phospho-ribosyl-glycinamide (GAR), producing 5-phospho-ribosyl-N-formylglycinamide (FGAR). Formate is provided by PurU via hydrolysis of 10-formyl-tetrahydrofolate. This is Formate-dependent phosphoribosylglycinamide formyltransferase from Salmonella paratyphi A (strain ATCC 9150 / SARB42).